Here is a 210-residue protein sequence, read N- to C-terminus: Putative O-methyltransferase MSMEG_5073/MSMEI_4947 (210 aa).

Residues Val-37, Glu-59, 61 to 62, Ser-67, Asp-85, and Val-86 contribute to the S-adenosyl-L-methionine site; that span reads GT. Residue Asp-133 participates in substrate binding. Asp-135 provides a ligand contact to S-adenosyl-L-methionine.

It belongs to the class I-like SAM-binding methyltransferase superfamily. Cation-dependent O-methyltransferase family.

The protein is Putative O-methyltransferase MSMEG_5073/MSMEI_4947 of Mycolicibacterium smegmatis (strain ATCC 700084 / mc(2)155) (Mycobacterium smegmatis).